Consider the following 300-residue polypeptide: Chaperone protein dnaJ 50 (300 aa).

An N-terminal signal peptide occupies residues 1 to 27 (MAPPVTERWCLALILLFLSLFVQSSTA). Residues 28–122 (IYCGAEDCYA…RAKYGHKSDP (95 aa)) lie on the Lumenal side of the membrane. Residues 34–98 (DCYALLGVAQ…TTRAQYDYAI (65 aa)) form the J domain. Asn46 and Asn88 each carry an N-linked (GlcNAc...) asparagine glycan. A helical transmembrane segment spans residues 123–143 (RAVLVGLLVVLSAFQYLNNVA). Over 144 to 206 (RYNEAIATVK…LQIKGAEKPS (63 aa)) the chain is Cytoplasmic. The chain crosses the membrane as a helical span at residues 207–227 (VWELLGVRFILLPYTIIKLLV). At 228–300 (WYSSWVWRYK…EMRKESKRRR (73 aa)) the chain is on the lumenal side.

As to expression, expressed in leaves, flower buds and flowers.

The protein localises to the endoplasmic reticulum membrane. Its function is as follows. May play a role in protein folding in the endoplasmic reticulum. The protein is Chaperone protein dnaJ 50 (C50) of Arabidopsis thaliana (Mouse-ear cress).